Consider the following 88-residue polypeptide: Conotoxin MaIr34 (88 aa).

The N-terminal stretch at 1–21 (MKLTCVIVAVLFLTAWTFVMA) is a signal peptide. Residues 22–53 (DDPRDGPDTAVRGGKRFWKARNEMNSAASKLN) constitute a propeptide that is removed on maturation. 3 cysteine pairs are disulfide-bonded: Cys-57-Cys-75, Cys-64-Cys-79, and Cys-74-Cys-83.

The protein belongs to the conotoxin O1 superfamily. In terms of tissue distribution, expressed by the venom duct.

The protein localises to the secreted. The polypeptide is Conotoxin MaIr34 (Conus marmoreus (Marble cone)).